The sequence spans 163 residues: MTIVSQVILKADDELRYPSGGELKNITDFFKTGEQRLRIAQVLSDSEKKIVDQASRKLWQRRPDFIAPGGNAYGQRQRAQCLRDYGWYLRLITYGVLAGDKEPIESIGLLGAREMYNSLGVPLPGMAEAIRTLKEASLALLSSADATVAAPYFDFLIQGMETI.

Asn-71 bears the N4-methylasparagine mark. Cys-81 is a binding site for (2R,3E)-phycocyanobilin.

Belongs to the phycobiliprotein family. As to quaternary structure, heterodimer of an alpha and a beta chain. In terms of processing, contains one covalently linked bilin chromophore.

Its subcellular location is the cellular thylakoid membrane. Light-harvesting photosynthetic bile pigment-protein from the phycobiliprotein complex. Allophycocyanin has a maximum absorption at approximately 650 nanometers. This is Allophycocyanin alpha-B chain from Synechococcus sp. (strain ATCC 27144 / PCC 6301 / SAUG 1402/1) (Anacystis nidulans).